The primary structure comprises 165 residues: 2-C-methyl-D-erythritol 2,4-cyclodiphosphate synthase (165 aa).

A divalent metal cation-binding residues include D8 and H10. 4-CDP-2-C-methyl-D-erythritol 2-phosphate contacts are provided by residues 8-10 and 34-35; these read DVH and HS. H42 lines the a divalent metal cation pocket. Residues 56–58, 61–65, 132–135, F139, and R142 each bind 4-CDP-2-C-methyl-D-erythritol 2-phosphate; these read DIG, FPDTD, and TTTE.

Belongs to the IspF family. In terms of assembly, homotrimer. A divalent metal cation serves as cofactor.

The enzyme catalyses 4-CDP-2-C-methyl-D-erythritol 2-phosphate = 2-C-methyl-D-erythritol 2,4-cyclic diphosphate + CMP. Its pathway is isoprenoid biosynthesis; isopentenyl diphosphate biosynthesis via DXP pathway; isopentenyl diphosphate from 1-deoxy-D-xylulose 5-phosphate: step 4/6. Involved in the biosynthesis of isopentenyl diphosphate (IPP) and dimethylallyl diphosphate (DMAPP), two major building blocks of isoprenoid compounds. Catalyzes the conversion of 4-diphosphocytidyl-2-C-methyl-D-erythritol 2-phosphate (CDP-ME2P) to 2-C-methyl-D-erythritol 2,4-cyclodiphosphate (ME-CPP) with a corresponding release of cytidine 5-monophosphate (CMP). The chain is 2-C-methyl-D-erythritol 2,4-cyclodiphosphate synthase from Halothermothrix orenii (strain H 168 / OCM 544 / DSM 9562).